Here is an 872-residue protein sequence, read N- to C-terminus: Alanine--tRNA ligase (872 aa).

Residues histidine 567, histidine 571, cysteine 669, and histidine 673 each coordinate Zn(2+).

This sequence belongs to the class-II aminoacyl-tRNA synthetase family. Zn(2+) is required as a cofactor.

It is found in the cytoplasm. The catalysed reaction is tRNA(Ala) + L-alanine + ATP = L-alanyl-tRNA(Ala) + AMP + diphosphate. Functionally, catalyzes the attachment of alanine to tRNA(Ala) in a two-step reaction: alanine is first activated by ATP to form Ala-AMP and then transferred to the acceptor end of tRNA(Ala). Also edits incorrectly charged Ser-tRNA(Ala) and Gly-tRNA(Ala) via its editing domain. The sequence is that of Alanine--tRNA ligase from Streptococcus pyogenes serotype M3 (strain ATCC BAA-595 / MGAS315).